The primary structure comprises 229 residues: Cell division protein FtsQ (229 aa).

Residues 1 to 21 (MIVLLCVIFAFLVYSNWHSWL) form a helical membrane-spanning segment. Residues 22–229 (ESLDRNPIRA…AAVGFSPLPK (208 aa)) lie on the Periplasmic side of the membrane. Positions 27–97 (NPIRAYALTH…DRLSITLIEH (71 aa)) constitute a POTRA domain.

This sequence belongs to the FtsQ/DivIB family. FtsQ subfamily. In terms of assembly, part of a complex composed of FtsB, FtsL and FtsQ.

The protein localises to the cell inner membrane. Its function is as follows. Essential cell division protein. May link together the upstream cell division proteins, which are predominantly cytoplasmic, with the downstream cell division proteins, which are predominantly periplasmic. May control correct divisome assembly. In Actinobacillus pleuropneumoniae serotype 3 (strain JL03), this protein is Cell division protein FtsQ.